The primary structure comprises 937 residues: Valine--tRNA ligase (937 aa).

A 'HIGH' region motif is present at residues 44 to 54; it reads PNVTGTLHMGH. A 'KMSKS' region motif is present at residues 548–552; sequence KMSKS. Lys551 is a binding site for ATP. The stretch at 874–937 forms a coiled coil; that stretch reads AAETARLTKE…KLKAQLLKLA (64 aa).

It belongs to the class-I aminoacyl-tRNA synthetase family. ValS type 1 subfamily. In terms of assembly, monomer.

The protein localises to the cytoplasm. The enzyme catalyses tRNA(Val) + L-valine + ATP = L-valyl-tRNA(Val) + AMP + diphosphate. Catalyzes the attachment of valine to tRNA(Val). As ValRS can inadvertently accommodate and process structurally similar amino acids such as threonine, to avoid such errors, it has a 'posttransfer' editing activity that hydrolyzes mischarged Thr-tRNA(Val) in a tRNA-dependent manner. In Laribacter hongkongensis (strain HLHK9), this protein is Valine--tRNA ligase.